A 217-amino-acid polypeptide reads, in one-letter code: Deoxyribose-phosphate aldolase 1 (217 aa).

Asp89 (proton donor/acceptor) is an active-site residue. Lys151 functions as the Schiff-base intermediate with acetaldehyde in the catalytic mechanism. Lys180 acts as the Proton donor/acceptor in catalysis.

Belongs to the DeoC/FbaB aldolase family. DeoC type 1 subfamily.

The protein localises to the cytoplasm. The catalysed reaction is 2-deoxy-D-ribose 5-phosphate = D-glyceraldehyde 3-phosphate + acetaldehyde. It participates in carbohydrate degradation; 2-deoxy-D-ribose 1-phosphate degradation; D-glyceraldehyde 3-phosphate and acetaldehyde from 2-deoxy-alpha-D-ribose 1-phosphate: step 2/2. Catalyzes a reversible aldol reaction between acetaldehyde and D-glyceraldehyde 3-phosphate to generate 2-deoxy-D-ribose 5-phosphate. This is Deoxyribose-phosphate aldolase 1 from Cutibacterium acnes (strain DSM 16379 / KPA171202) (Propionibacterium acnes).